A 451-amino-acid polypeptide reads, in one-letter code: UDP-N-acetylmuramoylalanine--D-glutamate ligase (451 aa).

Residue 119–125 (GSNGKTT) coordinates ATP.

Belongs to the MurCDEF family.

It is found in the cytoplasm. The catalysed reaction is UDP-N-acetyl-alpha-D-muramoyl-L-alanine + D-glutamate + ATP = UDP-N-acetyl-alpha-D-muramoyl-L-alanyl-D-glutamate + ADP + phosphate + H(+). Its pathway is cell wall biogenesis; peptidoglycan biosynthesis. Cell wall formation. Catalyzes the addition of glutamate to the nucleotide precursor UDP-N-acetylmuramoyl-L-alanine (UMA). This is UDP-N-acetylmuramoylalanine--D-glutamate ligase from Streptococcus agalactiae serotype III (strain NEM316).